Reading from the N-terminus, the 432-residue chain is Chorismate synthase aro-2 (432 aa).

Catalysis depends on residues H17, H106, and D367. The interval 406 to 432 is disordered; that stretch reads LKQTINSGKDTVGNGVSENVQESDLAQ. Positions 408-432 are enriched in polar residues; that stretch reads QTINSGKDTVGNGVSENVQESDLAQ.

This sequence belongs to the chorismate synthase family. Homotetramer.

The enzyme catalyses 5-O-(1-carboxyvinyl)-3-phosphoshikimate = chorismate + phosphate. It carries out the reaction FMNH2 + NADP(+) = FMN + NADPH + 2 H(+). It functions in the pathway metabolic intermediate biosynthesis; chorismate biosynthesis; chorismate from D-erythrose 4-phosphate and phosphoenolpyruvate: step 7/7. Bifunctional chorismate synthase and flavin reductase that catalyzes the conversion of 5-enolpyruvylshikimate 3-phosphate (EPSP) to form chorismate, which is the last common intermediate in the synthesis of the three aromatic amino acids phenylalanine, tyrosine and tryptophan. Acts also as a flavin reductase (FR) able to generate reduced flavin mononucleotide in the presence of NADPH. The polypeptide is Chorismate synthase aro-2 (Neurospora crassa (strain ATCC 24698 / 74-OR23-1A / CBS 708.71 / DSM 1257 / FGSC 987)).